We begin with the raw amino-acid sequence, 358 residues long: Peptide chain release factor 1 (358 aa).

Gln233 is subject to N5-methylglutamine.

This sequence belongs to the prokaryotic/mitochondrial release factor family. In terms of processing, methylated by PrmC. Methylation increases the termination efficiency of RF1.

The protein resides in the cytoplasm. In terms of biological role, peptide chain release factor 1 directs the termination of translation in response to the peptide chain termination codons UAG and UAA. The chain is Peptide chain release factor 1 from Flavobacterium johnsoniae (strain ATCC 17061 / DSM 2064 / JCM 8514 / BCRC 14874 / CCUG 350202 / NBRC 14942 / NCIMB 11054 / UW101) (Cytophaga johnsonae).